The primary structure comprises 160 residues: Transcription elongation factor GreB (160 aa).

This sequence belongs to the GreA/GreB family. GreB subfamily.

In terms of biological role, necessary for efficient RNA polymerase transcription elongation past template-encoded arresting sites. The arresting sites in DNA have the property of trapping a certain fraction of elongating RNA polymerases that pass through, resulting in locked ternary complexes. Cleavage of the nascent transcript by cleavage factors such as GreA or GreB allows the resumption of elongation from the new 3'terminus. GreB releases sequences of up to 9 nucleotides in length. This is Transcription elongation factor GreB from Vibrio vulnificus (strain YJ016).